The chain runs to 160 residues: Eosinophil cationic protein (160 aa).

Residues 1–27 (MVPKLFTSQICLLLLLGLMGVEGSLHA) form the signal peptide. The interval 28 to 72 (RPPQFTKAQWFAIQHINVNPPRCTIAMRVINNYQRRCKNQNTFLR) is required for nearly all of the bactericidal activities; partially involved in LPS-binding. His-42 functions as the Proton acceptor in the catalytic mechanism. Intrachain disulfides connect Cys-50–Cys-110, Cys-64–Cys-123, Cys-82–Cys-138, and Cys-89–Cys-98. Position 60 is a 3'-nitrotyrosine (Tyr-60). 65-69 (KNQNT) contacts substrate. Residues Asn-92 and Asn-119 are each glycosylated (N-linked (GlcNAc...) asparagine). His-155 functions as the Proton donor in the catalytic mechanism.

The protein belongs to the pancreatic ribonuclease family. Interacts with bacterial lipopolysaccharide (LPS) and lipoteichoic acid (LTA). In vitro interacts with phospholipid bilayers.

Its subcellular location is the secreted. Functionally, cytotoxin and helminthotoxin with low-efficiency ribonuclease activity. Possesses a wide variety of biological activities. Exhibits antibacterial activity. The polypeptide is Eosinophil cationic protein (RNASE3) (Macaca fascicularis (Crab-eating macaque)).